Consider the following 164-residue polypeptide: Vesiculogenesis and immune response regulator (164 aa).

Could be O-mannosylated. Is likely mannosylated on Thr-61 when overexpressed in M.smegmatis.

It is found in the cell inner membrane. The protein resides in the cytoplasm. Virulence factor that regulates vesiculogenesis. Acts by regulating the production of mycobacterial membrane vesicles (MV) bearing Toll-like receptor 2 (TLR2) ligands, including the lipoproteins LpqH, a major host TLR2 agonist, and SodC. By restraining the release of most of the material that activates host cells through TLR2, VirR reduces the immunostimulant potential of M.tuberculosis and increases its virulence. May contribute to cell envelope integrity. Functionally, when overexpressed in M.smegmatis, it modulates the production of IL-10, IL-12 p40 and TNF-alpha by RAW264.7 macrophages and it decreases the killing of M.smegmatis. The sequence is that of Vesiculogenesis and immune response regulator from Mycobacterium tuberculosis (strain ATCC 25618 / H37Rv).